We begin with the raw amino-acid sequence, 214 residues long: Hypoxanthine-guanine phosphoribosyltransferase (214 aa).

Position 2 is an N-acetylalanine (Ala2). Residue Lys69 participates in GMP binding. At Lys103 the chain carries N6-acetyllysine. A Glycyl lysine isopeptide (Lys-Gly) (interchain with G-Cter in SUMO1); alternate cross-link involves residue Lys115. Residue Lys115 forms a Glycyl lysine isopeptide (Lys-Gly) (interchain with G-Cter in SUMO2); alternate linkage. Residues 134–142 (EDIIDTGKT), Lys166, 186–188 (KFV), and Asp194 contribute to the GMP site. Asp138 functions as the Proton acceptor in the catalytic mechanism. Thr142 carries the post-translational modification Phosphothreonine. Residue Asp194 coordinates Mg(2+).

This sequence belongs to the purine/pyrimidine phosphoribosyltransferase family. As to quaternary structure, homotetramer. The cofactor is Mg(2+).

Its subcellular location is the cytoplasm. The enzyme catalyses IMP + diphosphate = hypoxanthine + 5-phospho-alpha-D-ribose 1-diphosphate. The catalysed reaction is GMP + diphosphate = guanine + 5-phospho-alpha-D-ribose 1-diphosphate. The protein operates within purine metabolism; IMP biosynthesis via salvage pathway; IMP from hypoxanthine: step 1/1. Its function is as follows. Converts guanine to guanosine monophosphate, and hypoxanthine to inosine monophosphate. Transfers the 5-phosphoribosyl group from 5-phosphoribosylpyrophosphate onto the purine. Plays a central role in the generation of purine nucleotides through the purine salvage pathway. The polypeptide is Hypoxanthine-guanine phosphoribosyltransferase (Hprt1) (Mus spretus (Western Mediterranean mouse)).